The sequence spans 276 residues: Mitochondrial outer membrane protein porin 1 (276 aa).

This sequence belongs to the eukaryotic mitochondrial porin (TC 1.B.8.1) family. Expressed in shoot meristems, root meristematic zone, lateral roots, leaves, stigma and anthers.

It localises to the mitochondrion outer membrane. Forms a channel through the mitochondrial outer membrane that allows diffusion of small hydrophilic molecules. The channel adopts an open conformation at low or zero membrane potential and a closed conformation at potentials above 30-40 mV. The open state has a weak anion selectivity whereas the closed state is cation-selective. Involved in plant development at reproductive stage, is important for pollen development and may regulate hydrogen peroxide generation during disease resistance. The chain is Mitochondrial outer membrane protein porin 1 (VDAC1) from Arabidopsis thaliana (Mouse-ear cress).